A 449-amino-acid chain; its full sequence is Bifunctional protein GlmU (449 aa).

A pyrophosphorylase region spans residues 1–226; that stretch reads MVIVAVLAAG…YEEILGVNDR (226 aa). Residues 7–10, Lys21, Gln73, and 78–79 each bind UDP-N-acetyl-alpha-D-glucosamine; these read LAAG and GT. Asp103 is a binding site for Mg(2+). The UDP-N-acetyl-alpha-D-glucosamine site is built by Gly140, Glu155, Asn170, and Asn224. Mg(2+) is bound at residue Asn224. Residues 227 to 247 form a linker region; sequence VQLAAAYQVLQNRIKKAWMQA. The N-acetyltransferase stretch occupies residues 248–449; the sequence is GVTLIDPASI…VVKPNWEPEA (202 aa). Residues Arg329 and Lys347 each contribute to the UDP-N-acetyl-alpha-D-glucosamine site. His359 serves as the catalytic Proton acceptor. UDP-N-acetyl-alpha-D-glucosamine contacts are provided by Tyr362 and Asn373. Residues Ala376, 382–383, Ala419, and Arg436 each bind acetyl-CoA; that span reads NY.

In the N-terminal section; belongs to the N-acetylglucosamine-1-phosphate uridyltransferase family. It in the C-terminal section; belongs to the transferase hexapeptide repeat family. As to quaternary structure, homotrimer. It depends on Mg(2+) as a cofactor.

It localises to the cytoplasm. The catalysed reaction is alpha-D-glucosamine 1-phosphate + acetyl-CoA = N-acetyl-alpha-D-glucosamine 1-phosphate + CoA + H(+). The enzyme catalyses N-acetyl-alpha-D-glucosamine 1-phosphate + UTP + H(+) = UDP-N-acetyl-alpha-D-glucosamine + diphosphate. It participates in nucleotide-sugar biosynthesis; UDP-N-acetyl-alpha-D-glucosamine biosynthesis; N-acetyl-alpha-D-glucosamine 1-phosphate from alpha-D-glucosamine 6-phosphate (route II): step 2/2. Its pathway is nucleotide-sugar biosynthesis; UDP-N-acetyl-alpha-D-glucosamine biosynthesis; UDP-N-acetyl-alpha-D-glucosamine from N-acetyl-alpha-D-glucosamine 1-phosphate: step 1/1. The protein operates within bacterial outer membrane biogenesis; LPS lipid A biosynthesis. Its function is as follows. Catalyzes the last two sequential reactions in the de novo biosynthetic pathway for UDP-N-acetylglucosamine (UDP-GlcNAc). The C-terminal domain catalyzes the transfer of acetyl group from acetyl coenzyme A to glucosamine-1-phosphate (GlcN-1-P) to produce N-acetylglucosamine-1-phosphate (GlcNAc-1-P), which is converted into UDP-GlcNAc by the transfer of uridine 5-monophosphate (from uridine 5-triphosphate), a reaction catalyzed by the N-terminal domain. The sequence is that of Bifunctional protein GlmU from Thermosynechococcus vestitus (strain NIES-2133 / IAM M-273 / BP-1).